The primary structure comprises 214 residues: Urease accessory protein UreF (214 aa).

Residues 70–95 are disordered; that stretch reads AAAGEAGDAETDARTPSPAARAASRA. Low complexity predominate over residues 83–95; that stretch reads RTPSPAARAASRA.

The protein belongs to the UreF family. As to quaternary structure, ureD, UreF and UreG form a complex that acts as a GTP-hydrolysis-dependent molecular chaperone, activating the urease apoprotein by helping to assemble the nickel containing metallocenter of UreC. The UreE protein probably delivers the nickel.

It localises to the cytoplasm. Its function is as follows. Required for maturation of urease via the functional incorporation of the urease nickel metallocenter. This is Urease accessory protein UreF from Mycolicibacterium vanbaalenii (strain DSM 7251 / JCM 13017 / BCRC 16820 / KCTC 9966 / NRRL B-24157 / PYR-1) (Mycobacterium vanbaalenii).